Consider the following 304-residue polypeptide: MLFSRFVLLAFGSVAAVSASSIYARGRGGSSTDQPVANPYNTKEISLAAGLVQQTYCDSTENGLKIGDSELLYTMGEGYARQRVNIYHSPSLGIAVAIEGTNLFSLNSDLHDAKFWQEDPNERYIQYYPKGTKLMHGFQQAYNDLMDDIFTAVKKYKKEKNEKRVTVIGHSLGAAMGLLCAMDIELRMDGGLYKTYLFGLPRLGNPTFASFVDQKIGDKFHSIINGRDWVPTVPPRALGYQHPSDYVWIYPGNSTSAKLYPGQENVHGILTVAREFNFDDHQGIYFHTQIGAVMGECPAQVGAH.

Positions 1–19 (MLFSRFVLLAFGSVAAVSA) are cleaved as a signal peptide. An O-linked (Man...) threonine glycan is attached at T32. A disulfide bridge connects residues C57 and C297. The Nucleophile role is filled by S171. The active site involves D228. N-linked (GlcNAc...) asparagine glycosylation is present at N253. Residue H281 is part of the active site.

Belongs to the AB hydrolase superfamily. Lipase family. Class 3 subfamily.

The protein localises to the secreted. It localises to the cell wall. It catalyses the reaction a monoacylglycerol + H2O = glycerol + a fatty acid + H(+). The catalysed reaction is a diacylglycerol + H2O = a monoacylglycerol + a fatty acid + H(+). RHC 80267, a well-known inhibitor of diacylglycerol lipases from mammals, also acts as an inhibitor for LIP1/SMG1. In terms of biological role, secreted lipase involved in Dandruff and seborrheic dermatitis (D/SD) probably via lipase-mediated breakdown of sebaceous lipids and release of irritating free fatty acids. Shows activity against monoglyceride and diglyceride substrates, but not triglyceride substrates and does not exhibit regio-selective production of diacylglycerols. Able to hydrolyze diacylglycerols such as distearin, dilinolein, dipalmitoylglycerol and dipalmitolein. Cleaves oleic acid from 1,2 isomers of diolein on both the 1 and the 2 position of the glycerol backbone, resulting mainly in free fatty acids but no monoolein is detected. Shows activity on monoolein and liberates mostly free fatty acids, but can also perform the reverse reaction and produce diolein. The polypeptide is Secreted mono- and diacylglycerol lipase LIP1 (Malassezia globosa (strain ATCC MYA-4612 / CBS 7966) (Dandruff-associated fungus)).